Reading from the N-terminus, the 376-residue chain is DNA replication and repair protein RecF (376 aa).

An ATP-binding site is contributed by 30-37; sequence GNNAQGKS.

Belongs to the RecF family.

It is found in the cytoplasm. In terms of biological role, the RecF protein is involved in DNA metabolism; it is required for DNA replication and normal SOS inducibility. RecF binds preferentially to single-stranded, linear DNA. It also seems to bind ATP. This chain is DNA replication and repair protein RecF, found in Trichormus variabilis (strain ATCC 29413 / PCC 7937) (Anabaena variabilis).